A 125-amino-acid chain; its full sequence is Prefoldin subunit beta (125 aa).

It belongs to the prefoldin subunit beta family. As to quaternary structure, heterohexamer of two alpha and four beta subunits.

Its subcellular location is the cytoplasm. Its function is as follows. Molecular chaperone capable of stabilizing a range of proteins. Seems to fulfill an ATP-independent, HSP70-like function in archaeal de novo protein folding. This is Prefoldin subunit beta (pfdB) from Sulfurisphaera tokodaii (strain DSM 16993 / JCM 10545 / NBRC 100140 / 7) (Sulfolobus tokodaii).